The sequence spans 365 residues: ATP-dependent (S)-NAD(P)H-hydrate dehydratase (365 aa).

A chloroplast-targeting transit peptide spans 1–43; that stretch reads MLVKPSIISGLVRLTSHSPSSSSSVLRRQEFLVRTLCGSPIIR. L2 is modified (N-acetylserine). In terms of domain architecture, YjeF C-terminal spans 53–361; the sequence is AESVLRTVTP…ECLGESLEDI (309 aa). Residues G169 and 222–228 contribute to the (6S)-NADPHX site; that span reads NVNEYKR. ATP contacts are provided by residues 262–266 and 281–290; these read KGKSD and GSPRRCGGQG. D291 is a binding site for (6S)-NADPHX.

This sequence belongs to the NnrD/CARKD family. It depends on Mg(2+) as a cofactor.

The protein resides in the plastid. It is found in the chloroplast. It localises to the cytoplasm. The catalysed reaction is (6S)-NADHX + ATP = ADP + phosphate + NADH + H(+). The enzyme catalyses (6S)-NADPHX + ATP = ADP + phosphate + NADPH + H(+). Functionally, catalyzes the dehydration of the S-form of NAD(P)HX at the expense of ATP, which is converted to ADP. Together with NAD(P)HX epimerase, which catalyzes the epimerization of the S- and R-forms, the enzyme allows the repair of both epimers of NAD(P)HX, a damaged form of NAD(P)H that is a result of enzymatic or heat-dependent hydration. The protein is ATP-dependent (S)-NAD(P)H-hydrate dehydratase of Arabidopsis thaliana (Mouse-ear cress).